A 586-amino-acid chain; its full sequence is Solute carrier family 13 member 2 (586 aa).

The next 3 membrane-spanning stretches (helical) occupy residues 13–33 (SYLI…IVQT), 53–73 (ALPL…MGIM), and 86–106 (TNIL…WNLH). Residues 165–175 (DVEEGNSNPSF) show a composition bias toward polar residues. The segment at 165–209 (DVEEGNSNPSFELQEASPQKEETKLDNGQAVSVSSEPRAQKTKEH) is disordered. Transmembrane regions (helical) follow at residues 215–235 (GLSL…LTGT), 264–284 (FAFP…QVLF), 319–339 (PMSF…VLWF), 366–386 (GTVA…IPGL), 407–427 (TVND…FALA), 445–465 (PLQH…VAIF), 478–498 (FLPI…YVML), 506–526 (LAFM…FGGL), and 535–555 (GFLL…SWSI).

Belongs to the SLC13A/DASS transporter (TC 2.A.47) family. NADC subfamily. Highly expressed in kidney and small intestine. Not detectable in brain, heart, stomach and skeletal muscle.

The protein resides in the apical cell membrane. The enzyme catalyses succinate(out) + 3 Na(+)(out) = succinate(in) + 3 Na(+)(in). It catalyses the reaction fumarate(out) + 3 Na(+)(out) = fumarate(in) + 3 Na(+)(in). The catalysed reaction is 2-oxoglutarate(out) + 3 Na(+)(out) = 2-oxoglutarate(in) + 3 Na(+)(in). Its activity is regulated as follows. Li(+) decreases succinate transport in the presence of Na(+), by competing at one of the three cation binding sites. Functionally, low-affinity sodium-dicarboxylate cotransporter, that mediates the entry of citric acid cycle intermediates, such as succinate, citrate, fumarate and alpha-ketoglutarate (2-oxoglutarate) into the small intestine and renal proximal tubule. Can transport citrate in a Na(+)-dependent manner, recognizing the divalent form of citrate rather than the trivalent form which is normally found in blood. Transports the dicarboxylate into the cell with a probable stoichiometry of 3 Na(+) for 1 divalent dicarboxylate, rendering the process electrogenic. Has a critical role in renal dicarboxylate transport. The chain is Solute carrier family 13 member 2 (Slc13a2) from Mus musculus (Mouse).